Here is a 33-residue protein sequence, read N- to C-terminus: Antimicrobial peptide MBP-1 (33 aa).

Predominantly in the embryo portion of the kernel.

It is found in the secreted. Its function is as follows. Inhibitor of both bacterial and fungal growth in vitro. The protein is Antimicrobial peptide MBP-1 of Zea mays (Maize).